The primary structure comprises 67 residues: Large ribosomal subunit protein bL35 (67 aa).

Positions 1–11 are enriched in basic residues; sequence MPKLKTRKAAA. Positions 1-22 are disordered; it reads MPKLKTRKAAAKRFEATGSGKK.

This sequence belongs to the bacterial ribosomal protein bL35 family.

This chain is Large ribosomal subunit protein bL35, found in Microcystis aeruginosa (strain NIES-843 / IAM M-2473).